The primary structure comprises 257 residues: UPF0246 protein YaaA (257 aa).

This sequence belongs to the UPF0246 family.

This chain is UPF0246 protein YaaA, found in Salmonella typhi.